We begin with the raw amino-acid sequence, 284 residues long: Bifunctional protein FolD (284 aa).

Residues 163-165 (GRS) and Ser188 contribute to the NADP(+) site.

The protein belongs to the tetrahydrofolate dehydrogenase/cyclohydrolase family. In terms of assembly, homodimer.

It carries out the reaction (6R)-5,10-methylene-5,6,7,8-tetrahydrofolate + NADP(+) = (6R)-5,10-methenyltetrahydrofolate + NADPH. It catalyses the reaction (6R)-5,10-methenyltetrahydrofolate + H2O = (6R)-10-formyltetrahydrofolate + H(+). It participates in one-carbon metabolism; tetrahydrofolate interconversion. Its function is as follows. Catalyzes the oxidation of 5,10-methylenetetrahydrofolate to 5,10-methenyltetrahydrofolate and then the hydrolysis of 5,10-methenyltetrahydrofolate to 10-formyltetrahydrofolate. This is Bifunctional protein FolD from Lactococcus lactis subsp. lactis (strain IL1403) (Streptococcus lactis).